Reading from the N-terminus, the 393-residue chain is Elongation factor Tu (393 aa).

In terms of domain architecture, tr-type G spans 10–203; that stretch reads KPHVNIGTIG…AVDDYIPEPV (194 aa). The segment at 19 to 26 is G1; sequence GHVDHGKT. Residue 19–26 coordinates GTP; it reads GHVDHGKT. Mg(2+) is bound at residue T26. Positions 60–64 are G2; that stretch reads GITIS. The segment at 81 to 84 is G3; it reads DCPG. Residues 81–85 and 136–139 each bind GTP; these read DCPGH and NKVD. A G4 region spans residues 136–139; it reads NKVD. The tract at residues 173-175 is G5; sequence SAL.

The protein belongs to the TRAFAC class translation factor GTPase superfamily. Classic translation factor GTPase family. EF-Tu/EF-1A subfamily. Monomer.

It localises to the cytoplasm. The enzyme catalyses GTP + H2O = GDP + phosphate + H(+). In terms of biological role, GTP hydrolase that promotes the GTP-dependent binding of aminoacyl-tRNA to the A-site of ribosomes during protein biosynthesis. In Chlorobium phaeobacteroides (strain BS1), this protein is Elongation factor Tu.